The sequence spans 461 residues: MTSILTPRQAEELHKAIIAYLSANNLSSSATALRTELGLAEDVFDAATAKKYEGLIEKKWTSVVRLQKKIMDLESRNNALQSELDNATPLSLAKRNTDPTAWLPAPRPRYSLESHQNTINCIAFHPVYSSIASGSDDCTIKIWDWELGELERTIKSHTRPVLDVDFGGPRGGILLASCSSDLTIKLWDPSDDYKNIRTLPGHDHSVSAIRFMPSGASGAAMSGNLLVSASRDMTLKIWDVSTGFCLKTIRGHTAWIRDVYPSLDGRYLLSTGDDSTVRLWDLSVTNPENRLTMIGHDHYIECCALAPPSSYPFLSRLAGLKKPPAATSTAEFMASGSRDKTIKLWDARGTLLKTLIGHDNWVRALVFHPGGRYLLSVSDDKTLRCWDLEQDGKCVKTIGDVHERFVTCLRWAPGVVMDAPAEADGQSNGTPRKKTEAAPAVRIRCVIATGSVDMKLRIFAN.

In terms of domain architecture, LisH spans 9–41 (QAEELHKAIIAYLSANNLSSSATALRTELGLAE). Residues 61-88 (TSVVRLQKKIMDLESRNNALQSELDNAT) are a coiled coil. WD repeat units follow at residues 114 to 155 (SHQN…RTIK), 157 to 197 (HTRP…KNIR), 201 to 248 (GHDH…CLKT), 251 to 290 (GHTAWIRDVYPSLDGRYLLSTGDDSTVRLWDLSVTNPENR), 295 to 355 (GHDH…LKTL), 357 to 396 (GHDNWVRALVFHPGGRYLLSVSDDKTLRCWDLEQDGKCVK), 401 to 444 (VHER…VRIR), and 446 to 461 (VIATGSVDMKLRIFAN).

It belongs to the WD repeat LIS1/nudF family. Self-associates. Interacts with NDL1 and dynein.

The protein resides in the cytoplasm. It is found in the cytoskeleton. Its subcellular location is the spindle pole. In terms of biological role, positively regulates the activity of the minus-end directed microtubule motor protein dynein. May enhance dynein-mediated microtubule sliding by targeting dynein to the microtubule plus end. Required for nuclear migration during vegetative growth as well as development. Required for retrograde early endosome (EE) transport from the hyphal tip. Required for localization of dynein to the mitotic spindle poles. Recruits additional proteins to the dynein complex at SPBs. In Pyricularia oryzae (strain 70-15 / ATCC MYA-4617 / FGSC 8958) (Rice blast fungus), this protein is Nuclear distribution protein PAC1.